We begin with the raw amino-acid sequence, 197 residues long: MTQSKNKVVIFLGPPGAGKGTQAARLAQEHQLVQLSTGDILRDHVARGTALGQQAGPLMEAGQLVPDELLIALIRDRLADMEPVRVIFDGFPRTQAQAEALDLLLEELGAPVSAVPLLEVPDQVLIDRIVDRGRQAVAEGRAPRADDNEETARKRQQVYREQTQPLIDYYARRGHLYTVDGLGTPDEVYERILSGMH.

An ATP-binding site is contributed by 16–21 (GAGKGT). Residues 36-65 (STGDILRDHVARGTALGQQAGPLMEAGQLV) form an NMP region. Residues Thr-37, Arg-42, 63–65 (QLV), 90–93 (GFPR), and Gln-97 each bind AMP. Residues 131–147 (DRGRQAVAEGRAPRADD) are LID. Arg-132 contributes to the ATP binding site. The interval 137 to 158 (VAEGRAPRADDNEETARKRQQV) is disordered. The span at 141-153 (RAPRADDNEETAR) shows a compositional bias: basic and acidic residues. AMP-binding residues include Arg-144 and Arg-155. An ATP-binding site is contributed by Gly-183.

This sequence belongs to the adenylate kinase family. In terms of assembly, monomer.

Its subcellular location is the cytoplasm. It carries out the reaction AMP + ATP = 2 ADP. The protein operates within purine metabolism; AMP biosynthesis via salvage pathway; AMP from ADP: step 1/1. Catalyzes the reversible transfer of the terminal phosphate group between ATP and AMP. Plays an important role in cellular energy homeostasis and in adenine nucleotide metabolism. In Deinococcus radiodurans (strain ATCC 13939 / DSM 20539 / JCM 16871 / CCUG 27074 / LMG 4051 / NBRC 15346 / NCIMB 9279 / VKM B-1422 / R1), this protein is Adenylate kinase.